A 168-amino-acid polypeptide reads, in one-letter code: Cell division inhibitor SulA (168 aa).

The interval 106–112 (ALLTGNY) is ftsZ binding. The tract at residues 161–168 (KIHSYLYH) is lon protease binding.

The protein belongs to the SulA family. In terms of assembly, interacts with FtsZ. Is rapidly cleaved and degraded by the Lon protease once DNA damage is repaired.

Component of the SOS system and an inhibitor of cell division. Accumulation of SulA causes rapid cessation of cell division and the appearance of long, non-septate filaments. In the presence of GTP, binds a polymerization-competent form of FtsZ in a 1:1 ratio, thus inhibiting FtsZ polymerization and therefore preventing it from participating in the assembly of the Z ring. This mechanism prevents the premature segregation of damaged DNA to daughter cells during cell division. The polypeptide is Cell division inhibitor SulA (Yersinia pseudotuberculosis serotype O:1b (strain IP 31758)).